The following is a 72-amino-acid chain: ATP synthase subunit c (72 aa).

2 helical membrane passes run 5–25 and 51–71; these read LLAA…IGIA and AGLS…LLFV.

Belongs to the ATPase C chain family. As to quaternary structure, F-type ATPases have 2 components, F(1) - the catalytic core - and F(0) - the membrane proton channel. F(1) has five subunits: alpha(3), beta(3), gamma(1), delta(1), epsilon(1). F(0) has three main subunits: a(1), b(2) and c(10-14). The alpha and beta chains form an alternating ring which encloses part of the gamma chain. F(1) is attached to F(0) by a central stalk formed by the gamma and epsilon chains, while a peripheral stalk is formed by the delta and b chains.

The protein localises to the cell membrane. Functionally, f(1)F(0) ATP synthase produces ATP from ADP in the presence of a proton or sodium gradient. F-type ATPases consist of two structural domains, F(1) containing the extramembraneous catalytic core and F(0) containing the membrane proton channel, linked together by a central stalk and a peripheral stalk. During catalysis, ATP synthesis in the catalytic domain of F(1) is coupled via a rotary mechanism of the central stalk subunits to proton translocation. Key component of the F(0) channel; it plays a direct role in translocation across the membrane. A homomeric c-ring of between 10-14 subunits forms the central stalk rotor element with the F(1) delta and epsilon subunits. This is ATP synthase subunit c from Clostridium perfringens (strain ATCC 13124 / DSM 756 / JCM 1290 / NCIMB 6125 / NCTC 8237 / Type A).